The sequence spans 421 residues: Testin (421 aa).

One can recognise a PET domain in the interval M92 to D199. Residues E133–C164 form a disordered region. Over residues P155–C164 the composition is skewed to basic and acidic residues. 3 LIM zinc-binding domains span residues Y234–E297, P299–V359, and Q362–S421.

It belongs to the prickle / espinas / testin family. As to quaternary structure, interacts via LIM domain 1 with ZYX. Interacts (via LIM domain 3) with ENAH and VASP. Interacts with ALKBH4, talin, actin, alpha-actinin, GRIP1 and PXN. Interacts (via LIM domain 2) with ACTL7A (via N-terminus). Heterodimer with ACTL7A; the heterodimer interacts with ENAH to form a heterotrimer.

The protein resides in the cytoplasm. It is found in the cell junction. It localises to the focal adhesion. In terms of biological role, scaffold protein that may play a role in cell adhesion, cell spreading and in the reorganization of the actin cytoskeleton. Plays a role in the regulation of cell proliferation. May act as a tumor suppressor. The chain is Testin (TES) from Callithrix jacchus (White-tufted-ear marmoset).